A 267-amino-acid polypeptide reads, in one-letter code: L-aspartate dehydrogenase (267 aa).

NAD(+) contacts are provided by alanine 124 and asparagine 190. Histidine 218 is an active-site residue.

Belongs to the L-aspartate dehydrogenase family.

It catalyses the reaction L-aspartate + NADP(+) + H2O = oxaloacetate + NH4(+) + NADPH + H(+). The enzyme catalyses L-aspartate + NAD(+) + H2O = oxaloacetate + NH4(+) + NADH + H(+). It functions in the pathway cofactor biosynthesis; NAD(+) biosynthesis; iminoaspartate from L-aspartate (dehydrogenase route): step 1/1. Functionally, specifically catalyzes the NAD or NADP-dependent dehydrogenation of L-aspartate to iminoaspartate. This chain is L-aspartate dehydrogenase, found in Methanococcus maripaludis (strain DSM 14266 / JCM 13030 / NBRC 101832 / S2 / LL).